A 762-amino-acid chain; its full sequence is Semaphorin-4A (762 aa).

An N-terminal signal peptide occupies residues 1–32 (MALPALGLDSWSFLGLFLFQLLLLFLPPATTA). Topologically, residues 33–684 (GREGQGPTPR…LAAPKSYWPH (652 aa)) are extracellular. In terms of domain architecture, Sema spans 37 to 495 (QGPTPRVKYH…FSGGIWKVPR (459 aa)). Cys114 and Cys125 form a disulfide bridge. Asn121 and Asn136 each carry an N-linked (GlcNAc...) asparagine glycan. Intrachain disulfides connect Cys143–Cys152, Cys270–Cys380, and Cys294–Cys340. N-linked (GlcNAc...) asparagine glycans are attached at residues Asn314 and Asn497. The PSI domain occupies 497–544 (NCSVYESCMDCVLARDPHCAWDPESQTCRLLPTPILKSWKQDMQQGNP). 2 disulfide bridges follow: Cys498–Cys515 and Cys507–Cys524. Positions 574–632 (NSILELPCPQSSALASYHWSHGVEAIPEAPSTVYNGSLLLLLRDGAGGLYQCWATENDF) constitute an Ig-like C2-type domain. The N-linked (GlcNAc...) asparagine glycan is linked to Asn608. A helical membrane pass occupies residues 685–705 (FLTVTVLLALVLSGALVTFLV). Over 706–762 (SPLGALRARGKVQGCGTLPSREKAPLSSEQCLQPSKEGRTSASDMDADNNLQGTEVA) the chain is Cytoplasmic. The segment at 722 to 762 (TLPSREKAPLSSEQCLQPSKEGRTSASDMDADNNLQGTEVA) is disordered.

Belongs to the semaphorin family. Interacts with PLXNB1, PLXNB2, PLXNB3, PLXND1 and TIMD2.

The protein resides in the cell membrane. Functionally, cell surface receptor for PLXNB1, PLXNB2, PLXNB3 and PLXND1 that plays an important role in cell-cell signaling. Regulates glutamatergic and GABAergic synapse development. Promotes the development of inhibitory synapses in a PLXNB1-dependent manner and promotes the development of excitatory synapses in a PLXNB2-dependent manner. Plays a role in priming antigen-specific T-cells, promotes differentiation of Th1 T-helper cells, and thereby contributes to adaptive immunity. Promotes phosphorylation of TIMD2. Inhibits angiogenesis. Promotes axon growth cone collapse. Inhibits axonal extension by providing local signals to specify territories inaccessible for growing axons. The chain is Semaphorin-4A (SEMA4A) from Bos taurus (Bovine).